We begin with the raw amino-acid sequence, 98 residues long: NADH-ubiquinone oxidoreductase chain 4L (98 aa).

The next 3 helical transmembrane spans lie at 1 to 21 (MSMMYFNIFMAFTVSLVGLLM), 29 to 49 (SLLCLEGMMLSLFVMMSVTIL), and 61 to 81 (IILLVFAACEAALGLSLLVMV).

Belongs to the complex I subunit 4L family. In terms of assembly, core subunit of respiratory chain NADH dehydrogenase (Complex I) which is composed of 45 different subunits.

The protein localises to the mitochondrion inner membrane. The enzyme catalyses a ubiquinone + NADH + 5 H(+)(in) = a ubiquinol + NAD(+) + 4 H(+)(out). Its function is as follows. Core subunit of the mitochondrial membrane respiratory chain NADH dehydrogenase (Complex I) which catalyzes electron transfer from NADH through the respiratory chain, using ubiquinone as an electron acceptor. Part of the enzyme membrane arm which is embedded in the lipid bilayer and involved in proton translocation. The sequence is that of NADH-ubiquinone oxidoreductase chain 4L (MT-ND4L) from Zalophus californianus (California sealion).